The chain runs to 79 residues: Defensin 2 (79 aa).

Positions 1–32 (VQKRTIIMEKKMAGFCIFFLILFLAQEYGVEG) are cleaved as a signal peptide. 3 disulfides stabilise this stretch: C35/C79, C46/C67, and C52/C73.

This sequence belongs to the DEFL family. May form dimers. Not glycosylated. In terms of processing, has 4 disulfide bonds.

Functionally, probably has antifungal activity. This is Defensin 2 from Arachis hypogaea (Peanut).